The primary structure comprises 365 residues: Major capsid protein (365 aa).

Positions 1-48 (MANKITTFLSGQTGKQISNIDLLNSIRTRASADYQADIPVLEGARINH) are excised as a propeptide.

It localises to the virion. Its function is as follows. Assembles to form an icosahedral capsid. The protein is Major capsid protein (9) of Streptococcus phage Cp-1 (Bacteriophage Cp-1).